Reading from the N-terminus, the 611-residue chain is Alpha-1,2-mannosyltransferase ALG9 (611 aa).

Positions 1–10 (MASRRARQRL) are enriched in basic residues. The segment at 1–51 (MASRRARQRLKGGGGGGGGGGDAGPAAEKLEQLGSREAGAEPRPESGNKAG) is disordered. Residues 1–135 (MASRRARQRL…FHARILQTNK (135 aa)) are Lumenal-facing. Gly residues predominate over residues 11 to 23 (KGGGGGGGGGGDA). N-linked (GlcNAc...) asparagine glycosylation occurs at N77. A helical membrane pass occupies residues 136–156 (ILVFYFLRCLLAFVSCVCELY). Topologically, residues 157-171 (FYKAVCKKFGLHVSR) are cytoplasmic. A helical transmembrane segment spans residues 172–192 (MMLAFLVLSTGMFCSSSAFLP). At 193-213 (SSFCMYTTLIAMTGWYMDKTP) the chain is on the lumenal side. Residues 214–234 (IAVLGVAAGAILGWPFSAALG) traverse the membrane as a helical segment. The Cytoplasmic segment spans residues 235–249 (LPIAFDLLARKHRWK). A helical transmembrane segment spans residues 250 to 270 (SFLLWSLVALALFLVPVVVID). Residues 271–310 (SYYYGKLVVAPLNIVLYNVFTSHGPDLYGTEPWYFYLING) lie on the Lumenal side of the membrane. A helical membrane pass occupies residues 311 to 331 (FLNFNVAFALALLVLPLTFLM). Topologically, residues 332-342 (EYLLQRFHVQN) are cytoplasmic. The chain crosses the membrane as a helical span at residues 343-363 (LGHPYWLTLAPMYIWFIIFFI). Residues 364–370 (QPHKEER) lie on the Lumenal side of the membrane. The chain crosses the membrane as a helical span at residues 371 to 391 (FLFPVYPLICLCGAVALSALQ). The Cytoplasmic portion of the chain corresponds to 392-405 (KCYHFVFQRYRLEH). A helical transmembrane segment spans residues 406–426 (YTVTSNWLALGTVFLFGLLSF). Over 427 to 611 (SRSVALFRGY…AKPSRKKSGG (185 aa)) the chain is Lumenal. N550 and N593 each carry an N-linked (GlcNAc...) asparagine glycan.

This sequence belongs to the glycosyltransferase 22 family.

Its subcellular location is the endoplasmic reticulum membrane. It carries out the reaction an alpha-D-Man-(1-&gt;2)-alpha-D-Man-(1-&gt;2)-alpha-D-Man-(1-&gt;3)-[alpha-D-Man-(1-&gt;3)-alpha-D-Man-(1-&gt;6)]-beta-D-Man-(1-&gt;4)-beta-D-GlcNAc-(1-&gt;4)-alpha-D-GlcNAc-diphospho-di-trans,poly-cis-dolichol + a di-trans,poly-cis-dolichyl beta-D-mannosyl phosphate = an alpha-D-Man-(1-&gt;2)-alpha-D-Man-(1-&gt;2)-alpha-D-Man-(1-&gt;3)-[alpha-D-Man-(1-&gt;2)-alpha-D-Man-(1-&gt;3)-alpha-D-Man-(1-&gt;6)]-beta-D-Man-(1-&gt;4)-beta-D-GlcNAc-(1-&gt;4)-alpha-D-GlcNAc-diphospho-di-trans,poly-cis-dolichol + a di-trans,poly-cis-dolichyl phosphate + H(+). The catalysed reaction is an alpha-D-Man-(1-&gt;2)-alpha-D-Man-(1-&gt;2)-alpha-D-Man-(1-&gt;3)-[alpha-D-Man-(1-&gt;2)-alpha-D-Man-(1-&gt;3)-[alpha-D-Man-(1-&gt;6)]-alpha-D-Man-(1-&gt;6)]-beta-D-Man-(1-&gt;4)-beta-D-GlcNAc-(1-&gt;4)-alpha-D-GlcNAc-diphospho-di-trans,poly-cis-dolichol + a di-trans,poly-cis-dolichyl beta-D-mannosyl phosphate = an alpha-D-Man-(1-&gt;2)-alpha-D-Man-(1-&gt;2)-alpha-D-Man-(1-&gt;3)-[alpha-D-Man-(1-&gt;2)-alpha-D-Man-(1-&gt;3)-[alpha-D-Man-(1-&gt;2)-alpha-D-Man-(1-&gt;6)]-alpha-D-Man-(1-&gt;6)]-beta-D-Man-(1-&gt;4)-beta-D-GlcNAc-(1-&gt;4)-alpha-D-GlcNAc-diphospho-di-trans,poly-cis-dolichol + a di-trans,poly-cis-dolichyl phosphate + H(+). It functions in the pathway protein modification; protein glycosylation. Functionally, mannosyltransferase that operates in the biosynthetic pathway of dolichol-linked oligosaccharides, the glycan precursors employed in protein asparagine (N)-glycosylation. The assembly of dolichol-linked oligosaccharides begins on the cytosolic side of the endoplasmic reticulum membrane and finishes in its lumen. The sequential addition of sugars to dolichol pyrophosphate produces dolichol-linked oligosaccharides containing fourteen sugars, including two GlcNAcs, nine mannoses and three glucoses. Once assembled, the oligosaccharide is transferred from the lipid to nascent proteins by oligosaccharyltransferases. In the lumen of the endoplasmic reticulum, catalyzes the addition of the seventh and ninth alpha-1,2-linked mannose residues to Man(6)GlcNAc(2)-PP-dolichol and Man(8)GlcNAc(2)-PP-dolichol respectively. The chain is Alpha-1,2-mannosyltransferase ALG9 from Mus musculus (Mouse).